Here is a 294-residue protein sequence, read N- to C-terminus: Putative immediate early glycoprotein (294 aa).

The first 21 residues, 1–21 (MKKLTMESLLVYTFVMGVCFT), serve as a signal peptide directing secretion. Residues 262–282 (LFFLAGGAFTMLLLLCCLSMI) form a helical membrane-spanning segment.

It belongs to the herpesviridae immediate early glycoprotein family.

It is found in the host membrane. This is Putative immediate early glycoprotein (U18) from Homo sapiens (Human).